Consider the following 264-residue polypeptide: MHQYQDLLEHILSDGAEKHDRTGTGTLSVFGHQMRFDLAAGFPMLTTKKLPFKAIVHELLWFLAGDTNVRYLQNNGVSIWDEWADANGDLGPVYGKQWRSWQAPDGRSIDQITNLVQMIRTNPDSRRLIVTAWNPADVEQMALPPCHCLFQFYVANGRLSCQLYQRSADVFLGVPFNIASYALLMMMIAQVTDLAPGHFVHTFGDAHLYSNHLDQARLQLTRAPRALPTLRINPAVRDIFGFRYEDFKLENYDPHPHIKAEVAV.

DUMP-binding positions include R21 and 126-127 (RR). The active-site Nucleophile is the C146. DUMP is bound by residues 166–169 (RSAD), N177, and 207–209 (HLY). D169 contributes to the (6R)-5,10-methylene-5,6,7,8-tetrahydrofolate binding site. A263 is a (6R)-5,10-methylene-5,6,7,8-tetrahydrofolate binding site.

Belongs to the thymidylate synthase family. Bacterial-type ThyA subfamily. In terms of assembly, homodimer.

Its subcellular location is the cytoplasm. The enzyme catalyses dUMP + (6R)-5,10-methylene-5,6,7,8-tetrahydrofolate = 7,8-dihydrofolate + dTMP. Its pathway is pyrimidine metabolism; dTTP biosynthesis. Functionally, catalyzes the reductive methylation of 2'-deoxyuridine-5'-monophosphate (dUMP) to 2'-deoxythymidine-5'-monophosphate (dTMP) while utilizing 5,10-methylenetetrahydrofolate (mTHF) as the methyl donor and reductant in the reaction, yielding dihydrofolate (DHF) as a by-product. This enzymatic reaction provides an intracellular de novo source of dTMP, an essential precursor for DNA biosynthesis. The chain is Thymidylate synthase from Afipia carboxidovorans (strain ATCC 49405 / DSM 1227 / KCTC 32145 / OM5) (Oligotropha carboxidovorans).